Reading from the N-terminus, the 282-residue chain is 40S small subunit processome assembly factor 1 (282 aa).

Disordered stretches follow at residues 27–98 (YDLG…SEVP) and 121–143 (FHSR…NKTK). Basic and acidic residues predominate over residues 48-59 (KRDSETVADRAA). A phosphoserine mark is found at Ser-67 and Ser-75. Residues 89 to 98 (SAPAAPSEVP) are compositionally biased toward low complexity. A compositionally biased stretch (basic and acidic residues) spans 131-143 (KSEEDKPAKNKTK). The residue at position 173 (Lys-173) is an N6-acetyllysine. The span at 208–226 (EKRTSMEEEKRAAQETDIF) shows a compositional bias: basic and acidic residues. A disordered region spans residues 208-254 (EKRTSMEEEKRAAQETDIFKRKKRKGRSQEDRRSKKLAPSILSSGRA). Phosphoserine is present on Ser-268.

In terms of assembly, part of the small subunit (SSU) processome, composed of more than 70 proteins and the RNA chaperone small nucleolar RNA (snoRNA) U3.

The protein resides in the chromosome. It localises to the nucleus. It is found in the nucleolus. Functionally, part of the small subunit (SSU) processome, first precursor of the small eukaryotic ribosomal subunit. During the assembly of the SSU processome in the nucleolus, many ribosome biogenesis factors, an RNA chaperone and ribosomal proteins associate with the nascent pre-rRNA and work in concert to generate RNA folding, modifications, rearrangements and cleavage as well as targeted degradation of pre-ribosomal RNA by the RNA exosome. Prevents helicase DHX37 to be recruited before post-A1 state. This chain is 40S small subunit processome assembly factor 1, found in Rattus norvegicus (Rat).